Reading from the N-terminus, the 644-residue chain is DNA mismatch repair protein MutL (644 aa).

The segment at 336–400 is disordered; sequence ERPFEPSSPQ…EISRDSSLGE (65 aa). Positions 373 to 400 are enriched in basic and acidic residues; that stretch reads SKTHSTWDEASRVDTSRAEISRDSSLGE.

The protein belongs to the DNA mismatch repair MutL/HexB family.

This protein is involved in the repair of mismatches in DNA. It is required for dam-dependent methyl-directed DNA mismatch repair. May act as a 'molecular matchmaker', a protein that promotes the formation of a stable complex between two or more DNA-binding proteins in an ATP-dependent manner without itself being part of a final effector complex. The protein is DNA mismatch repair protein MutL of Shewanella sp. (strain MR-7).